The chain runs to 54 residues: Chymosin (54 aa).

The propeptide at 1–27 (SEITRVPLHKGKSLRKALKEHGLLEBF) is activation peptide.

It belongs to the peptidase A1 family. In terms of assembly, monomer.

The enzyme catalyses Broad specificity similar to that of pepsin A. Clots milk by cleavage of a single 104-Ser-Phe-|-Met-Ala-107 bond in kappa-chain of casein.. Functionally, chymosin is synthesized in the mucosa of the stomach. The enzyme hydrolyzes casein to paracasein. This chain is Chymosin (CYM), found in Felis catus (Cat).